The following is a 251-amino-acid chain: Triosephosphate isomerase (251 aa).

9 to 11 (NWK) contacts substrate. The Electrophile role is filled by H94. E166 acts as the Proton acceptor in catalysis. Substrate contacts are provided by residues G172, S211, and 232–233 (GG).

Belongs to the triosephosphate isomerase family. In terms of assembly, homodimer.

Its subcellular location is the cytoplasm. The catalysed reaction is D-glyceraldehyde 3-phosphate = dihydroxyacetone phosphate. It participates in carbohydrate biosynthesis; gluconeogenesis. It functions in the pathway carbohydrate degradation; glycolysis; D-glyceraldehyde 3-phosphate from glycerone phosphate: step 1/1. In terms of biological role, involved in the gluconeogenesis. Catalyzes stereospecifically the conversion of dihydroxyacetone phosphate (DHAP) to D-glyceraldehyde-3-phosphate (G3P). The sequence is that of Triosephosphate isomerase from Stenotrophomonas maltophilia (strain R551-3).